Reading from the N-terminus, the 335-residue chain is Beta-ketoacyl-[acyl-carrier-protein] synthase III (335 aa).

Active-site residues include Cys-119 and His-261. The interval 262 to 266 (QANQR) is ACP-binding. Asn-291 is an active-site residue.

It belongs to the thiolase-like superfamily. FabH family. Homodimer.

Its subcellular location is the cytoplasm. The catalysed reaction is malonyl-[ACP] + acetyl-CoA + H(+) = 3-oxobutanoyl-[ACP] + CO2 + CoA. It functions in the pathway lipid metabolism; fatty acid biosynthesis. Catalyzes the condensation reaction of fatty acid synthesis by the addition to an acyl acceptor of two carbons from malonyl-ACP. Catalyzes the first condensation reaction which initiates fatty acid synthesis and may therefore play a role in governing the total rate of fatty acid production. Possesses both acetoacetyl-ACP synthase and acetyl transacylase activities. Its substrate specificity determines the biosynthesis of branched-chain and/or straight-chain of fatty acids. The polypeptide is Beta-ketoacyl-[acyl-carrier-protein] synthase III (Prochlorococcus marinus (strain MIT 9515)).